A 444-amino-acid polypeptide reads, in one-letter code: Tubulin beta-8 chain (444 aa).

The MREI motif signature appears at 1–4 (MREI). GTP contacts are provided by Gln11, Glu69, Ser138, Gly142, Thr143, and Gly144. Glu69 is a binding site for Mg(2+). Ser172 is subject to Phosphoserine; by CDK1. The GTP site is built by Asn204 and Asn226. Residues 423-444 (QQYQDATAEEEEDEEYAEEEVA) form a disordered region. Residues 429–444 (TAEEEEDEEYAEEEVA) show a composition bias toward acidic residues. Residue Glu436 is modified to 5-glutamyl polyglutamate.

This sequence belongs to the tubulin family. As to quaternary structure, dimer of alpha and beta chains. A typical microtubule is a hollow water-filled tube with an outer diameter of 25 nm and an inner diameter of 15 nM. Alpha-beta heterodimers associate head-to-tail to form protofilaments running lengthwise along the microtubule wall with the beta-tubulin subunit facing the microtubule plus end conferring a structural polarity. Microtubules usually have 13 protofilaments but different protofilament numbers can be found in some organisms and specialized cells. The cofactor is Mg(2+). In terms of processing, some glutamate residues at the C-terminus are polyglutamylated, resulting in polyglutamate chains on the gamma-carboxyl group. Polyglutamylation plays a key role in microtubule severing by spastin (SPAST). SPAST preferentially recognizes and acts on microtubules decorated with short polyglutamate tails: severing activity by SPAST increases as the number of glutamates per tubulin rises from one to eight, but decreases beyond this glutamylation threshold. Glutamylation is also involved in cilia motility. Post-translationally, some glutamate residues at the C-terminus are monoglycylated but not polyglycylated due to the absence of functional TTLL10 in human. Monoglycylation is mainly limited to tubulin incorporated into cilia and flagella axonemes, which is required for their stability and maintenance. Flagella glycylation controls sperm motility. Both polyglutamylation and monoglycylation can coexist on the same protein on adjacent residues, and lowering glycylation levels increases polyglutamylation, and reciprocally. Phosphorylated on Ser-172 by CDK1 during the cell cycle, from metaphase to telophase, but not in interphase. This phosphorylation inhibits tubulin incorporation into microtubules. As to expression, expressed at a high level in oocytes, at different stages of development.

The protein localises to the cytoplasm. It is found in the cytoskeleton. It localises to the spindle. Functionally, tubulin is the major constituent of microtubules, a cylinder consisting of laterally associated linear protofilaments composed of alpha- and beta-tubulin heterodimers. Microtubules grow by the addition of GTP-tubulin dimers to the microtubule end, where a stabilizing cap forms. Below the cap, tubulin dimers are in GDP-bound state, owing to GTPase activity of alpha-tubulin. TUBB8 has a key role in meiotic spindle assembly and oocyte maturation. The protein is Tubulin beta-8 chain of Homo sapiens (Human).